A 1091-amino-acid polypeptide reads, in one-letter code: Voltage-dependent calcium channel subunit alpha-2/delta-1 (1091 aa).

The N-terminal stretch at 1–24 (MAAGCLLALTLTLFQSWLIGPSSE) is a signal peptide. Residues 25–1061 (EPFPSPVTIK…VLEDYTDCGG (1037 aa)) are Extracellular-facing. Asparagine 92 carries N-linked (GlcNAc...) asparagine glycosylation. Serine 119 is subject to Phosphoserine. N-linked (GlcNAc...) asparagine glycans are attached at residues asparagine 136 and asparagine 184. The 178-residue stretch at 252 to 429 (DMLILVDVSG…INTQEYLDVL (178 aa)) folds into the VWFA domain. Residues aspartate 258, serine 260, and serine 262 each contribute to the a divalent metal cation site. Residues 258–262 (DVSGS) carry the MIDAS-like motif motif. Residues asparagine 323 and asparagine 347 are each glycosylated (N-linked (GlcNAc...) asparagine). Cysteine 403 and cysteine 1047 are disulfide-bonded. The 92-residue stretch at 445–536 (WTNVYLDALE…QPKNPKSQEP (92 aa)) folds into the Cache domain. 4 N-linked (GlcNAc...) asparagine glycosylation sites follow: asparagine 593, asparagine 769, asparagine 876, and asparagine 973. Residues 1062-1082 (VSGLNPSLWSIFGLQFILLWL) traverse the membrane as a helical segment. Over 1083-1091 (VSGSRHYLW) the chain is Cytoplasmic.

Belongs to the calcium channel subunit alpha-2/delta family. In terms of assembly, dimer formed of alpha-2-1 and delta-1 chains; disulfide-linked. Voltage-dependent calcium channels are multisubunit complexes, consisting of alpha-1 (CACNA1), alpha-2 (CACNA2D), beta (CACNB) and delta (CACNA2D) subunits in a 1:1:1:1 ratio. Post-translationally, proteolytically processed into subunits alpha-2-1 and delta-1 that are disulfide-linked.

It is found in the membrane. The protein localises to the cell membrane. The alpha-2/delta subunit of voltage-dependent calcium channels regulates calcium current density and activation/inactivation kinetics of the calcium channel. Plays an important role in excitation-contraction coupling. In Rattus norvegicus (Rat), this protein is Voltage-dependent calcium channel subunit alpha-2/delta-1 (Cacna2d1).